A 62-amino-acid polypeptide reads, in one-letter code: Small polypeptide DEVIL 17 (62 aa).

The required for DVL/RTFL small polypeptide activity stretch occupies residues 27–58 (RRNKGCLAMVKERRSRFYIARRCILMLLCWHK). A helical membrane pass occupies residues 39-56 (RRSRFYIARRCILMLLCW).

Belongs to the DVL/RTFL small polypeptides family.

It localises to the cell membrane. In terms of biological role, small polypeptide acting as a regulatory molecule which coordinates cellular responses required for differentiation, growth and development, probably by restricting polar cell proliferation in lateral organs and coordinating socket cell recruitment and differentiation at trichome sites. In Arabidopsis thaliana (Mouse-ear cress), this protein is Small polypeptide DEVIL 17.